Here is a 220-residue protein sequence, read N- to C-terminus: N-(5'-phosphoribosyl)anthranilate isomerase (220 aa).

Belongs to the TrpF family.

The catalysed reaction is N-(5-phospho-beta-D-ribosyl)anthranilate = 1-(2-carboxyphenylamino)-1-deoxy-D-ribulose 5-phosphate. It participates in amino-acid biosynthesis; L-tryptophan biosynthesis; L-tryptophan from chorismate: step 3/5. The sequence is that of N-(5'-phosphoribosyl)anthranilate isomerase from Gloeothece citriformis (strain PCC 7424) (Cyanothece sp. (strain PCC 7424)).